Here is a 256-residue protein sequence, read N- to C-terminus: Small ribosomal subunit protein eS1A (256 aa).

Residue alanine 2 is modified to N-acetylalanine; partial.

It belongs to the eukaryotic ribosomal protein eS1 family. In terms of assembly, component of the small ribosomal subunit. Mature ribosomes consist of a small (40S) and a large (60S) subunit. The 40S subunit contains about 33 different proteins and 1 molecule of RNA (18S). The 60S subunit contains about 49 different proteins and 3 molecules of RNA (25S, 5.8S and 5S).

It localises to the cytoplasm. This is Small ribosomal subunit protein eS1A from Scheffersomyces stipitis (strain ATCC 58785 / CBS 6054 / NBRC 10063 / NRRL Y-11545) (Yeast).